Here is a 462-residue protein sequence, read N- to C-terminus: A-type ATP synthase subunit B (462 aa).

It belongs to the ATPase alpha/beta chains family. As to quaternary structure, has multiple subunits with at least A(3), B(3), C, D, E, F, H, I and proteolipid K(x).

The protein resides in the cell membrane. Component of the A-type ATP synthase that produces ATP from ADP in the presence of a proton gradient across the membrane. The B chain is a regulatory subunit. The sequence is that of A-type ATP synthase subunit B from Methanobrevibacter smithii (strain ATCC 35061 / DSM 861 / OCM 144 / PS).